The primary structure comprises 645 residues: Protein hrpC2 (645 aa).

A run of 7 helical transmembrane segments spans residues 18-34, 43-59, 108-124, 201-217, 243-259, 285-301, and 308-324; these read VAIA…MILP, LLGI…MVTM, LVVG…FLII, IAGL…GIVV, VSQI…GVMI, ARAL…FAFV, and LFLL…YTIW. Positions 334 to 354 are disordered; that stretch reads DQRKLPSASRKGAKGEAPHIR.

Belongs to the FHIPEP (flagella/HR/invasion proteins export pore) family.

The protein resides in the cell inner membrane. Involved in the secretion of a proteinaceous elicitor of the hypersensitivity response in plants. In Xanthomonas euvesicatoria, this protein is Protein hrpC2 (hrpC2).